The sequence spans 428 residues: L-gulono-1,4-lactone dehydrogenase (428 aa).

An FAD-binding PCMH-type domain is found at 12-179; it reads QVCAPSAIVR…SQVTLQTVPL (168 aa).

This sequence belongs to the oxygen-dependent FAD-linked oxidoreductase family. It depends on a divalent metal cation as a cofactor.

It catalyses the reaction L-gulono-1,4-lactone + 2 Fe(III)-[cytochrome c] = L-ascorbate + 2 Fe(II)-[cytochrome c] + 3 H(+). It participates in cofactor biosynthesis; L-ascorbate biosynthesis. Oxidizes L-gulono-1,4-lactone to L-xylo-hexulonolactone which spontaneously isomerizes to L-ascorbate. This is L-gulono-1,4-lactone dehydrogenase from Mycobacterium tuberculosis (strain CDC 1551 / Oshkosh).